The chain runs to 226 residues: uncharacterized protein (226 aa).

Residues 121 to 141 traverse the membrane as a helical segment; it reads YLIGNIIGLPLTIPFILIPLI.

It to yeast YDL183c.

It is found in the membrane. This is an uncharacterized protein from Schizosaccharomyces pombe (strain 972 / ATCC 24843) (Fission yeast).